The sequence spans 476 residues: Calcitonin gene-related peptide type 1 receptor (476 aa).

Residues 1–33 (METLQMGLLSRSALFKYIIIFLIMINTRGYVLA) form the signal peptide. Residues 34 to 154 (SQEQEAKTSV…FTHEKVKTAL (121 aa)) lie on the Extracellular side of the membrane. Intrachain disulfides connect C63–C89, C80–C120, and C103–C142. N-linked (GlcNAc...) asparagine glycosylation is found at N81, N133, and N138. A helical transmembrane segment spans residues 155–179 (NLYYLTIIGHGLSIASLLISLGIFF). The Cytoplasmic portion of the chain corresponds to 180–190 (YFKNLSCQRIT). Residues 191 to 213 (LHKNLFFSFVCNSIITIISLSAV) traverse the membrane as a helical segment. Over 214 to 224 (ANNQALVATNP) the chain is Extracellular. The helical transmembrane segment at 225-253 (VICKISQFIHLYLMGCNYFWMLCEGIYLH) threads the bilayer. Over 254–267 (TLIVVAVFAEKQHL) the chain is Cytoplasmic. Residues 268-288 (MWYYLLGWGFPLIPACIHAVA) traverse the membrane as a helical segment. At 289-304 (RSLYYNDNCWISSETH) the chain is on the extracellular side. The chain crosses the membrane as a helical span at residues 305 to 329 (LLYIIHGPICAALLVNLFFLLNIVR). At 330 to 344 (VLITKLKVTHQAESN) the chain is on the cytoplasmic side. The chain crosses the membrane as a helical span at residues 345–366 (LYMKAVRATLILVPLLGIEFVL). The Extracellular segment spans residues 367–381 (FPWKPEGRIAEEIYD). Residues 382 to 402 (YVMHILMHYQGLLVATIFCFF) traverse the membrane as a helical segment. The Cytoplasmic segment spans residues 403-476 (NGEVQAVLKR…VFFKTEKQYM (74 aa)).

Belongs to the G-protein coupled receptor 2 family.

It localises to the cell membrane. May function as G protein-coupled receptor for calcitonin-gene-related peptides and adrenomedullin. Specificity may be modulated by accessory proteins. May activate cAMP-dependent pathway. This is Calcitonin gene-related peptide type 1 receptor (calcrl) from Xenopus laevis (African clawed frog).